The sequence spans 141 residues: uncharacterized protein (141 aa).

A helical membrane pass occupies residues 13–35 (PVIGVILMVAITVILAAVIASFV).

Its subcellular location is the membrane. This is an uncharacterized protein from Archaeoglobus fulgidus (strain ATCC 49558 / DSM 4304 / JCM 9628 / NBRC 100126 / VC-16).